The chain runs to 421 residues: Enolase (421 aa).

Residue Gln162 coordinates (2R)-2-phosphoglycerate. Residue Glu204 is the Proton donor of the active site. Positions 241, 284, and 311 each coordinate Mg(2+). Residues Lys336, Arg365, Ser366, and Lys387 each coordinate (2R)-2-phosphoglycerate. Lys336 (proton acceptor) is an active-site residue.

It belongs to the enolase family. Requires Mg(2+) as cofactor.

It localises to the cytoplasm. The protein localises to the secreted. The protein resides in the cell surface. The catalysed reaction is (2R)-2-phosphoglycerate = phosphoenolpyruvate + H2O. It participates in carbohydrate degradation; glycolysis; pyruvate from D-glyceraldehyde 3-phosphate: step 4/5. In terms of biological role, catalyzes the reversible conversion of 2-phosphoglycerate (2-PG) into phosphoenolpyruvate (PEP). It is essential for the degradation of carbohydrates via glycolysis. The protein is Enolase of Nautilia profundicola (strain ATCC BAA-1463 / DSM 18972 / AmH).